A 179-amino-acid chain; its full sequence is Large ribosomal subunit protein uL10 (179 aa).

It belongs to the universal ribosomal protein uL10 family. In terms of assembly, part of the ribosomal stalk of the 50S ribosomal subunit. The N-terminus interacts with L11 and the large rRNA to form the base of the stalk. The C-terminus forms an elongated spine to which L12 dimers bind in a sequential fashion forming a multimeric L10(L12)X complex.

In terms of biological role, forms part of the ribosomal stalk, playing a central role in the interaction of the ribosome with GTP-bound translation factors. This Mycolicibacterium vanbaalenii (strain DSM 7251 / JCM 13017 / BCRC 16820 / KCTC 9966 / NRRL B-24157 / PYR-1) (Mycobacterium vanbaalenii) protein is Large ribosomal subunit protein uL10.